A 199-amino-acid chain; its full sequence is Chaperone protein TorD (199 aa).

The protein belongs to the TorD/DmsD family. TorD subfamily.

It localises to the cytoplasm. In terms of biological role, involved in the biogenesis of TorA. Acts on TorA before the insertion of the molybdenum cofactor and, as a result, probably favors a conformation of the apoenzyme that is competent for acquiring the cofactor. This is Chaperone protein TorD from Actinobacillus pleuropneumoniae serotype 3 (strain JL03).